The chain runs to 397 residues: Lysophospholipid transporter LplT (397 aa).

The Periplasmic portion of the chain corresponds to methionine 1 to lysine 17. Residues alanine 18–leucine 38 form a helical membrane-spanning segment. Topologically, residues alanine 39 to proline 52 are cytoplasmic. Residues isoleucine 53–alanine 73 form a helical membrane-spanning segment. Residues aspartate 74 to leucine 90 lie on the Periplasmic side of the membrane. Residues leucine 91–valine 111 traverse the membrane as a helical segment. Over glycine 112 to threonine 144 the chain is Cytoplasmic. Residues isoleucine 145 to valine 165 form a helical membrane-spanning segment. A topological domain (periplasmic) is located at residue alanine 166. Residues leucine 167 to leucine 187 traverse the membrane as a helical segment. Over alanine 188–serine 226 the chain is Cytoplasmic. The helical transmembrane segment at leucine 227–leucine 247 threads the bilayer. Residues glycine 248–threonine 256 lie on the Periplasmic side of the membrane. Residues tyrosine 257–valine 277 form a helical membrane-spanning segment. Over threonine 278–glutamate 280 the chain is Cytoplasmic. Residues threonine 281–leucine 301 form a helical membrane-spanning segment. Over glutamine 302–glutamate 304 the chain is Periplasmic. A helical transmembrane segment spans residues leucine 305–proline 325. Residues leucine 326 to alanine 343 are Cytoplasmic-facing. Residues isoleucine 344–leucine 364 form a helical membrane-spanning segment. At alanine 365 to valine 366 the chain is on the periplasmic side. Residues methionine 367–isoleucine 387 form a helical membrane-spanning segment. Topologically, residues threonine 388 to histidine 397 are cytoplasmic.

It belongs to the major facilitator superfamily. LplT (TC 2.A.1.42) family.

Its subcellular location is the cell inner membrane. Functionally, catalyzes the facilitated diffusion of 2-acyl-glycero-3-phosphoethanolamine (2-acyl-GPE) into the cell. The sequence is that of Lysophospholipid transporter LplT from Shigella boydii serotype 4 (strain Sb227).